The sequence spans 490 residues: Cytochrome P450 71B29 (490 aa).

Residues 1 to 21 (MAIILCFLILLPLILIFLKKL) form a helical membrane-spanning segment. Heme is bound at residue cysteine 440.

The protein belongs to the cytochrome P450 family. Heme is required as a cofactor.

The protein resides in the membrane. The chain is Cytochrome P450 71B29 (CYP71B29) from Arabidopsis thaliana (Mouse-ear cress).